Reading from the N-terminus, the 733-residue chain is Nuclear hormone receptor family member nhr-66 (733 aa).

Composition is skewed to low complexity over residues 113 to 130 (PAIP…SQAS) and 165 to 185 (QQNR…QQQN). The tract at residues 113-190 (PAIPSSSSCS…AQQQNSMARK (78 aa)) is disordered. A DNA-binding region (nuclear receptor) is located at residues 266–343 (VPACAICGTD…SGMDKNSVQH (78 aa)). NR C4-type zinc fingers lie at residues 269–289 (CAIC…CAAC) and 305–326 (CNKG…CRAC). The segment at 361–396 (PDAEFEPSAKVSTVSEPSTSSGPSGGFNQNVSSPAG) is disordered. A compositionally biased stretch (low complexity) spans 371-382 (VSTVSEPSTSSG). Positions 444 to 687 (CLGDWFRKPS…ACFNQMLDVE (244 aa)) constitute an NR LBD domain. The segment at 676 to 687 (ADACFNQMLDVE) is AF-2. Residues 691–733 (VSPDGQKDSEAEQGPSPVSVPEAARGSYQDDDMPPVLEKNCDL) form a disordered region.

This sequence belongs to the nuclear hormone receptor family. In terms of assembly, interacts with nuclear hormone receptor nhr-49; the interaction is direct. As to expression, widely expressed, including in hypodermis, gut, muscle, and neuronal cells of the ventral nerve cord, head, and tail ganglia. Expressed in the head ganglion in several sensory and interneurons, including AVA.

It is found in the nucleus. Transcription factor. Binds to regulatory elements and regulates transcription of target genes, including the potassium channel accessory subunit mps-2. Negatively regulates transcription of mps-2, thereby modulating age-dependent memory decline. In concert with nuclear hormone receptor nhr-49, involved in regulating target genes with roles in sphingolipid breakdown and lipid remodeling. Plays a role in modulating mitochondrial morphology and function. The chain is Nuclear hormone receptor family member nhr-66 from Caenorhabditis elegans.